Here is a 430-residue protein sequence, read N- to C-terminus: MNVGKLQPVRGTRDLLPEECYKFWHIRDVAHDIGERYGFVPVETPIFEFQDVFLKTLGDSSDIIGKEMYSFPDRGGDVLVLRPELTAAVARMLICERLTLPARLFTFGPVFRYERPQKCRQRQFHQINYEHFGAGCTADAELMALAYDILGALNLRSEVQLEINSLGNQDSILGYRNSLLKYFEKHEHALSEDSRRRLQTNPLRILDSKDRGDIAILCGAPVIADFYDDESNMTFNGVMQQLDNLGIPYTVNPRLVRGLDYYCGTVFEFKTTSLGSQDAVIAGGRYDKLVASMGGGDVPAVGFAGGVERLASLAAYSHSTRFSVAFLPLGEEAARCAMRSAYELRGRGIRVLCDGVVEKLKIGLKHADRSGVDLALILGDEEIAKGEVLCRHMDTGLQQTVSISNLGDYVSGMESNAQGNNRAALSSAGE.

This sequence belongs to the class-II aminoacyl-tRNA synthetase family. As to quaternary structure, homodimer.

It is found in the cytoplasm. The catalysed reaction is tRNA(His) + L-histidine + ATP = L-histidyl-tRNA(His) + AMP + diphosphate + H(+). The chain is Histidine--tRNA ligase from Anaplasma marginale (strain St. Maries).